The primary structure comprises 158 residues: 6,7-dimethyl-8-ribityllumazine synthase (158 aa).

5-amino-6-(D-ribitylamino)uracil-binding positions include Phe-23, 61–63, and 85–87; these read SFE and AVI. 90–91 is a binding site for (2S)-2-hydroxy-3-oxobutyl phosphate; it reads ET. Residue His-93 is the Proton donor of the active site. A 5-amino-6-(D-ribitylamino)uracil-binding site is contributed by Phe-118. Arg-132 lines the (2S)-2-hydroxy-3-oxobutyl phosphate pocket.

The protein belongs to the DMRL synthase family.

The enzyme catalyses (2S)-2-hydroxy-3-oxobutyl phosphate + 5-amino-6-(D-ribitylamino)uracil = 6,7-dimethyl-8-(1-D-ribityl)lumazine + phosphate + 2 H2O + H(+). Its pathway is cofactor biosynthesis; riboflavin biosynthesis; riboflavin from 2-hydroxy-3-oxobutyl phosphate and 5-amino-6-(D-ribitylamino)uracil: step 1/2. Catalyzes the formation of 6,7-dimethyl-8-ribityllumazine by condensation of 5-amino-6-(D-ribitylamino)uracil with 3,4-dihydroxy-2-butanone 4-phosphate. This is the penultimate step in the biosynthesis of riboflavin. This is 6,7-dimethyl-8-ribityllumazine synthase from Prochlorococcus marinus (strain MIT 9312).